The primary structure comprises 353 residues: S-adenosylmethionine:tRNA ribosyltransferase-isomerase (353 aa).

Belongs to the QueA family. As to quaternary structure, monomer.

The protein resides in the cytoplasm. The enzyme catalyses 7-aminomethyl-7-carbaguanosine(34) in tRNA + S-adenosyl-L-methionine = epoxyqueuosine(34) in tRNA + adenine + L-methionine + 2 H(+). It functions in the pathway tRNA modification; tRNA-queuosine biosynthesis. In terms of biological role, transfers and isomerizes the ribose moiety from AdoMet to the 7-aminomethyl group of 7-deazaguanine (preQ1-tRNA) to give epoxyqueuosine (oQ-tRNA). In Blochmanniella floridana, this protein is S-adenosylmethionine:tRNA ribosyltransferase-isomerase.